Reading from the N-terminus, the 176-residue chain is Ribosome maturation factor RimM (176 aa).

The PRC barrel domain maps to 101-170 (EGEYFESDLI…RITVELPEGL (70 aa)).

This sequence belongs to the RimM family. In terms of assembly, binds ribosomal protein uS19.

The protein localises to the cytoplasm. Its function is as follows. An accessory protein needed during the final step in the assembly of 30S ribosomal subunit, possibly for assembly of the head region. Essential for efficient processing of 16S rRNA. May be needed both before and after RbfA during the maturation of 16S rRNA. It has affinity for free ribosomal 30S subunits but not for 70S ribosomes. The polypeptide is Ribosome maturation factor RimM (Solibacter usitatus (strain Ellin6076)).